Consider the following 401-residue polypeptide: E3 ubiquitin-protein ligase NHLRC1 (401 aa).

Residues 28 to 74 (CKVCFERFGHWQQRRPRNLPCGHVVCLACVAALAHPRTLGLECPFCR) form an RING-type zinc finger. NHL repeat units follow at residues 115–159 (TLTC…FDSG), 163–206 (AHQF…FDFF), 207–247 (GQIK…LEAD), 250–303 (EGVL…FNST), 304–352 (MQLI…LGKP), and 353–396 (EEFP…FKVM).

As to quaternary structure, interacts with AGL. Interacts (via the NHL repeats) with EPM2A/laforin. Forms a complex with EPM2A/laforin and HSP70. Interacts with PRDM8.

The protein localises to the endoplasmic reticulum. Its subcellular location is the nucleus. The catalysed reaction is S-ubiquitinyl-[E2 ubiquitin-conjugating enzyme]-L-cysteine + [acceptor protein]-L-lysine = [E2 ubiquitin-conjugating enzyme]-L-cysteine + N(6)-ubiquitinyl-[acceptor protein]-L-lysine.. The protein operates within protein modification; protein ubiquitination. Functionally, E3 ubiquitin-protein ligase. Together with the phosphatase EPM2A/laforin, appears to be involved in the clearance of toxic polyglucosan and protein aggregates via multiple pathways. In complex with EPM2A/laforin and HSP70, suppresses the cellular toxicity of misfolded proteins by promoting their degradation through the ubiquitin-proteasome system (UPS). Ubiquitinates the glycogen-targeting protein phosphatase subunits PPP1R3C/PTG and PPP1R3D in a laforin-dependent manner and targets them for proteasome-dependent degradation, thus decreasing glycogen accumulation. Polyubiquitinates EPM2A/laforin and ubiquitinates AGL and targets them for proteasome-dependent degradation. Also promotes proteasome-independent protein degradation through the macroautophagy pathway. The protein is E3 ubiquitin-protein ligase NHLRC1 (Nhlrc1) of Mus musculus (Mouse).